Consider the following 147-residue polypeptide: UPF0178 protein CV_1768 (147 aa).

The protein belongs to the UPF0178 family.

In Chromobacterium violaceum (strain ATCC 12472 / DSM 30191 / JCM 1249 / CCUG 213 / NBRC 12614 / NCIMB 9131 / NCTC 9757 / MK), this protein is UPF0178 protein CV_1768.